Reading from the N-terminus, the 214-residue chain is Ion-translocating oxidoreductase complex subunit G (214 aa).

Residues 13-33 (ALLLGLFALVGVGLVALVQQF) form a helical membrane-spanning segment. Threonine 180 carries the post-translational modification FMN phosphoryl threonine.

This sequence belongs to the RnfG family. The complex is composed of six subunits: RnfA, RnfB, RnfC, RnfD, RnfE and RnfG. The cofactor is FMN.

The protein resides in the cell inner membrane. Part of a membrane-bound complex that couples electron transfer with translocation of ions across the membrane. The polypeptide is Ion-translocating oxidoreductase complex subunit G (Pseudomonas aeruginosa (strain UCBPP-PA14)).